A 299-amino-acid polypeptide reads, in one-letter code: N-acetylaspartate synthetase (299 aa).

Residues 44–57 show a composition bias toward pro residues; the sequence is AAPGPAAAPPPAAG. Residues 44 to 70 are disordered; that stretch reads AAPGPAAAPPPAAGPQPHGGTGGAGPP. Residues 60 to 70 show a composition bias toward gly residues; it reads PHGGTGGAGPP. A helical membrane pass occupies residues 118 to 138; sequence YALLAALCFAVTRSLLLTCLV. The region spanning 143-280 is the N-acetyltransferase domain; sequence LALRYYYSRK…VLPGMTLSLA (138 aa).

The protein belongs to the NAT8 family. In terms of tissue distribution, expressed in brain, including in mesencephalic dopaminergic neurons of the substantia nigra and ventral tegmental area and oligodendrocytes. Expressed in cortical pyramidal neurons and granule cells of the hippocampus (at protein level).

The protein resides in the cytoplasm. It localises to the microsome membrane. It is found in the mitochondrion membrane. The protein localises to the endoplasmic reticulum membrane. The enzyme catalyses L-aspartate + acetyl-CoA = N-acetyl-L-aspartate + CoA + H(+). Its activity is regulated as follows. Aminooxyacetic acid (AOAA) blocks its activity in both cytoplasm and mitochondria. In terms of biological role, catalyzes the synthesis of N-acetylaspartate acid (NAA) from L-aspartate and acetyl-CoA. Promotes dopamine uptake by regulating TNF-alpha expression. Attenuates methamphetamine-induced inhibition of dopamine uptake. The chain is N-acetylaspartate synthetase (Nat8l) from Rattus norvegicus (Rat).